Here is a 178-residue protein sequence, read N- to C-terminus: Co-chaperone protein p23-1 (178 aa).

The region spanning 2 to 91 (SRHPTVKWAQ…AESKWWNRLT (90 aa)) is the CS domain. 2 stretches are compositionally biased toward acidic residues: residues 112-126 (DDED…DFGD) and 136-155 (DTDE…EGET). Positions 112–178 (DDEDKGGEGD…DEEGVNAKKD (67 aa)) are disordered. Basic and acidic residues predominate over residues 157–178 (AETKEKKIDGEKDEEGVNAKKD).

The protein belongs to the p23/wos2 family. As to quaternary structure, interacts with HSP90 in an ATP-dependent manner.

In terms of biological role, acts as a co-chaperone for HSP90. This chain is Co-chaperone protein p23-1, found in Brassica napus (Rape).